The chain runs to 201 residues: LexA repressor 1 (201 aa).

The segment at residues 27–47 (LAEIAQAFGFASRNAAQKHVQ) is a DNA-binding region (H-T-H motif). Catalysis depends on for autocatalytic cleavage activity residues Ser122 and Lys159.

This sequence belongs to the peptidase S24 family. As to quaternary structure, homodimer.

The catalysed reaction is Hydrolysis of Ala-|-Gly bond in repressor LexA.. In terms of biological role, represses a number of genes involved in the response to DNA damage (SOS response), including recA and lexA. In the presence of single-stranded DNA, RecA interacts with LexA causing an autocatalytic cleavage which disrupts the DNA-binding part of LexA, leading to derepression of the SOS regulon and eventually DNA repair. The chain is LexA repressor 1 from Xanthomonas oryzae pv. oryzae (strain KACC10331 / KXO85).